We begin with the raw amino-acid sequence, 264 residues long: 5'-nucleotidase SurE (264 aa).

Positions 10, 11, 43, and 97 each coordinate a divalent metal cation.

This sequence belongs to the SurE nucleotidase family. The cofactor is a divalent metal cation.

Its subcellular location is the cytoplasm. It catalyses the reaction a ribonucleoside 5'-phosphate + H2O = a ribonucleoside + phosphate. Its function is as follows. Nucleotidase that shows phosphatase activity on nucleoside 5'-monophosphates. The chain is 5'-nucleotidase SurE from Sulfurimonas denitrificans (strain ATCC 33889 / DSM 1251) (Thiomicrospira denitrificans (strain ATCC 33889 / DSM 1251)).